The following is a 216-amino-acid chain: Putative F-box protein At2g03610 (216 aa).

The F-box domain occupies 19 to 69 (NQDWSKLCPDLLRPILESLSSIDFHRAKTVCSDWYSVWKTCKGYDSKWNQN).

This Arabidopsis thaliana (Mouse-ear cress) protein is Putative F-box protein At2g03610.